Consider the following 283-residue polypeptide: 4-diphosphocytidyl-2-C-methyl-D-erythritol kinase (283 aa).

Lys-10 is an active-site residue. 99 to 109 (PMGGGLGGGSS) is an ATP binding site. Residue Asp-141 is part of the active site.

The protein belongs to the GHMP kinase family. IspE subfamily. As to quaternary structure, homodimer.

It carries out the reaction 4-CDP-2-C-methyl-D-erythritol + ATP = 4-CDP-2-C-methyl-D-erythritol 2-phosphate + ADP + H(+). Its pathway is isoprenoid biosynthesis; isopentenyl diphosphate biosynthesis via DXP pathway; isopentenyl diphosphate from 1-deoxy-D-xylulose 5-phosphate: step 3/6. In terms of biological role, catalyzes the phosphorylation of the position 2 hydroxy group of 4-diphosphocytidyl-2C-methyl-D-erythritol. This chain is 4-diphosphocytidyl-2-C-methyl-D-erythritol kinase, found in Shigella boydii serotype 18 (strain CDC 3083-94 / BS512).